Here is a 267-residue protein sequence, read N- to C-terminus: Very long chain fatty acid elongase 6 (267 aa).

N-linked (GlcNAc...) asparagine glycosylation occurs at N2. Transmembrane regions (helical) follow at residues 34-51 (FLFS…RHLM), 70-90 (LAVF…YILM), 111-131 (FWAY…IFII), 136-156 (KLIF…WYSY), 159-179 (MVAG…VMYS), 197-217 (FITL…YLVF), and 234-254 (IFWS…FFFE).

Belongs to the ELO family. ELOVL6 subfamily. N-Glycosylated. Expressed in liver and barely in brain.

The protein resides in the endoplasmic reticulum membrane. It catalyses the reaction a very-long-chain acyl-CoA + malonyl-CoA + H(+) = a very-long-chain 3-oxoacyl-CoA + CO2 + CoA. The catalysed reaction is hexadecanoyl-CoA + malonyl-CoA + H(+) = 3-oxooctadecanoyl-CoA + CO2 + CoA. The enzyme catalyses (9Z)-hexadecenoyl-CoA + malonyl-CoA + H(+) = 3-oxo-(11Z)-octadecenoyl-CoA + CO2 + CoA. It carries out the reaction dodecanoyl-CoA + malonyl-CoA + H(+) = 3-oxotetradecanoyl-CoA + CO2 + CoA. It catalyses the reaction tetradecanoyl-CoA + malonyl-CoA + H(+) = 3-oxohexadecanoyl-CoA + CO2 + CoA. The catalysed reaction is (9Z)-octadecenoyl-CoA + malonyl-CoA + H(+) = 3-oxo-(11Z)-eicosenoyl-CoA + CO2 + CoA. The enzyme catalyses (9Z,12Z)-octadecadienoyl-CoA + malonyl-CoA + H(+) = (11Z,14Z)-3-oxoicosa-11,14-dienoyl-CoA + CO2 + CoA. It carries out the reaction (9Z,12Z,15Z)-octadecatrienoyl-CoA + malonyl-CoA + H(+) = (11Z,14Z,17Z)-3-oxoeicosatrienoyl-CoA + CO2 + CoA. It participates in lipid metabolism; fatty acid biosynthesis. The reaction is stimulated by the presence of HSD17B12, the enzyme catalyzing the second step of the elongation cycle. In terms of biological role, catalyzes the first and rate-limiting reaction of the four reactions that constitute the long-chain fatty acids elongation cycle. This endoplasmic reticulum-bound enzymatic process allows the addition of 2 carbons to the chain of long- and very long-chain fatty acids (VLCFAs) per cycle. Condensing enzyme that elongates fatty acids with 12, 14 and 16 carbons with higher activity toward C16:0 acyl-CoAs. Catalyzes the synthesis of unsaturated C16 long chain fatty acids and, to a lesser extent, C18:0 and those with low desaturation degree. May participate in the production of saturated and monounsaturated VLCFAs of different chain lengths that are involved in multiple biological processes as precursors of membrane lipids and lipid mediators. In Rattus norvegicus (Rat), this protein is Very long chain fatty acid elongase 6.